The primary structure comprises 131 residues: Mediator of RNA polymerase II transcription subunit 31 (131 aa).

Ala2 carries the N-acetylalanine modification.

This sequence belongs to the Mediator complex subunit 31 family. As to quaternary structure, component of the Mediator complex, which is composed of MED1, MED4, MED6, MED7, MED8, MED9, MED10, MED11, MED12, MED13, MED13L, MED14, MED15, MED16, MED17, MED18, MED19, MED20, MED21, MED22, MED23, MED24, MED25, MED26, MED27, MED29, MED30, MED31, CCNC, CDK8 and CDC2L6/CDK11. The MED12, MED13, CCNC and CDK8 subunits form a distinct module termed the CDK8 module. Mediator containing the CDK8 module is less active than Mediator lacking this module in supporting transcriptional activation. Individual preparations of the Mediator complex lacking one or more distinct subunits have been variously termed ARC, CRSP, DRIP, PC2, SMCC and TRAP.

The protein resides in the nucleus. In terms of biological role, component of the Mediator complex, a coactivator involved in the regulated transcription of nearly all RNA polymerase II-dependent genes. Mediator functions as a bridge to convey information from gene-specific regulatory proteins to the basal RNA polymerase II transcription machinery. Mediator is recruited to promoters by direct interactions with regulatory proteins and serves as a scaffold for the assembly of a functional preinitiation complex with RNA polymerase II and the general transcription factors. The chain is Mediator of RNA polymerase II transcription subunit 31 (MED31) from Homo sapiens (Human).